Reading from the N-terminus, the 320-residue chain is Geranylgeranyl pyrophosphate synthase (320 aa).

Residues K35, R38, and H67 each contribute to the isopentenyl diphosphate site. Mg(2+)-binding residues include D74 and D78. A dimethylallyl diphosphate-binding site is contributed by R83. R84 contacts isopentenyl diphosphate. Positions 168, 169, 206, 223, and 233 each coordinate dimethylallyl diphosphate.

It belongs to the FPP/GGPP synthase family. It depends on Mg(2+) as a cofactor.

Its subcellular location is the cytoplasm. It catalyses the reaction isopentenyl diphosphate + dimethylallyl diphosphate = (2E)-geranyl diphosphate + diphosphate. It carries out the reaction isopentenyl diphosphate + (2E)-geranyl diphosphate = (2E,6E)-farnesyl diphosphate + diphosphate. The catalysed reaction is isopentenyl diphosphate + (2E,6E)-farnesyl diphosphate = (2E,6E,10E)-geranylgeranyl diphosphate + diphosphate. Its pathway is isoprenoid biosynthesis; farnesyl diphosphate biosynthesis; farnesyl diphosphate from geranyl diphosphate and isopentenyl diphosphate: step 1/1. The protein operates within isoprenoid biosynthesis; geranyl diphosphate biosynthesis; geranyl diphosphate from dimethylallyl diphosphate and isopentenyl diphosphate: step 1/1. It functions in the pathway isoprenoid biosynthesis; geranylgeranyl diphosphate biosynthesis; geranylgeranyl diphosphate from farnesyl diphosphate and isopentenyl diphosphate: step 1/1. Its function is as follows. Catalyzes the trans-addition of the 3 molecules of IPP onto DMAPP to form geranylgeranyl pyrophosphate. May be involved in vesicle trafficking and protein sorting. The chain is Geranylgeranyl pyrophosphate synthase (BTS1) from Eremothecium gossypii (strain ATCC 10895 / CBS 109.51 / FGSC 9923 / NRRL Y-1056) (Yeast).